Consider the following 138-residue polypeptide: Thyrotropin subunit beta (138 aa).

The first 20 residues, 1-20, serve as a signal peptide directing secretion; it reads MTATFLMSLLFGLAFGQTMS. 6 disulfide bridges follow: cysteine 22–cysteine 72, cysteine 36–cysteine 87, cysteine 39–cysteine 125, cysteine 47–cysteine 103, cysteine 51–cysteine 105, and cysteine 108–cysteine 115. N-linked (GlcNAc...) asparagine glycosylation is present at asparagine 43. Residues 133-138 constitute a propeptide that is removed on maturation; sequence LVGFPV.

This sequence belongs to the glycoprotein hormones subunit beta family. As to quaternary structure, heterodimer of a common alpha chain and a unique beta chain which confers biological specificity to thyrotropin, lutropin, follitropin and gonadotropin.

It is found in the secreted. Functionally, indispensable for the control of thyroid structure and metabolism. The polypeptide is Thyrotropin subunit beta (TSHB) (Monodelphis domestica (Gray short-tailed opossum)).